Here is a 222-residue protein sequence, read N- to C-terminus: MNQMLPEQLLNQLNLVEKALAALRNGQGVLVADDPGRENEADLIFPAESVTIPQMALLIRECSGIVCLCMTDGKIRSLELPMMVENNTSGFQTAFTVSIEAAEGVTTGVSAADRVKTVRTAVSENARPSDLRHPGHIFPLRARPGGVLERPGHTEATVDLMRLAGLSPAGVLCELTNPDGSMAGIEETFAFSVQHGFPVLSIGDIVAYRKSLLQTGSQGLSA.

D-ribulose 5-phosphate-binding positions include 37–38, Asp-42, 150–154, and Glu-174; these read RE and RPGHT. Residue Glu-38 participates in Mg(2+) binding. A Mg(2+)-binding site is contributed by His-153.

The protein belongs to the DHBP synthase family. In terms of assembly, homodimer. It depends on Mg(2+) as a cofactor. Requires Mn(2+) as cofactor.

The catalysed reaction is D-ribulose 5-phosphate = (2S)-2-hydroxy-3-oxobutyl phosphate + formate + H(+). It functions in the pathway cofactor biosynthesis; riboflavin biosynthesis; 2-hydroxy-3-oxobutyl phosphate from D-ribulose 5-phosphate: step 1/1. In terms of biological role, catalyzes the conversion of D-ribulose 5-phosphate to formate and 3,4-dihydroxy-2-butanone 4-phosphate. This Chlorobium limicola (strain DSM 245 / NBRC 103803 / 6330) protein is 3,4-dihydroxy-2-butanone 4-phosphate synthase.